A 1307-amino-acid polypeptide reads, in one-letter code: Rab3 GTPase-activating protein regulatory subunit (1307 aa).

It belongs to the Rab3-GAP regulatory subunit family. As to quaternary structure, the Rab3 GTPase-activating complex is a heterodimer composed of rbg-1 and rbg-2.

Its subcellular location is the cytoplasm. Its function is as follows. Probable regulatory subunit of a GTPase activating protein that has specificity for Rab3 subfamily. Rab3 proteins are involved in regulated exocytosis of neurotransmitters and hormones. Rab3 GTPase-activating complex specifically converts active Rab3-GTP to the inactive form Rab3-GDP. The chain is Rab3 GTPase-activating protein regulatory subunit (rbg-2) from Caenorhabditis elegans.